Consider the following 121-residue polypeptide: Large ribosomal subunit protein bL20 (121 aa).

The protein belongs to the bacterial ribosomal protein bL20 family.

Functionally, binds directly to 23S ribosomal RNA and is necessary for the in vitro assembly process of the 50S ribosomal subunit. It is not involved in the protein synthesizing functions of that subunit. This chain is Large ribosomal subunit protein bL20, found in Orientia tsutsugamushi (strain Ikeda) (Rickettsia tsutsugamushi).